Reading from the N-terminus, the 156-residue chain is Small ribosomal subunit protein uS7 (156 aa).

The protein belongs to the universal ribosomal protein uS7 family. As to quaternary structure, part of the 30S ribosomal subunit. Contacts proteins S9 and S11.

Its function is as follows. One of the primary rRNA binding proteins, it binds directly to 16S rRNA where it nucleates assembly of the head domain of the 30S subunit. Is located at the subunit interface close to the decoding center, probably blocks exit of the E-site tRNA. This Geobacillus kaustophilus (strain HTA426) protein is Small ribosomal subunit protein uS7.